A 770-amino-acid polypeptide reads, in one-letter code: Disabled homolog 2 (770 aa).

Residues 1-16 show a composition bias toward polar residues; it reads MSNEVETSATNGQPDQ. Positions 1 to 38 are disordered; that stretch reads MSNEVETSATNGQPDQQAAPKAPSKKEKKKGPEKTDEY. An N-acetylserine modification is found at Ser-2. Phosphoserine is present on Ser-2. Residues 45–196 form the PID domain; sequence GDGVKYKAKL…KAVENGSEAL (152 aa). A Phosphotyrosine modification is found at Tyr-170. Ser-193 is subject to Phosphoserine. The interval 230–447 is required for localization to clathrin-coated pits; sequence ESKDILLVDL…KPGRGRRTAK (218 aa). Disordered regions lie at residues 284–482 and 604–629; these read LNFF…LQPN and VSTQ…AGPP. 2 consecutive short sequence motifs (DPF) follow at residues 293-295 and 298-300; these read DPF. Residues 302–313 show a composition bias toward polar residues; sequence QPDQSTPSSFDS. Phosphoserine; in mitosis is present on residues Ser-326 and Ser-328. Positions 366–396 are enriched in polar residues; that stretch reads FSSSQTQPAVRTQNGVSEREQNGFSVKSSPN. Position 401 is a phosphoserine (Ser-401). Polar residues-rich tracts occupy residues 407 to 425, 466 to 480, and 604 to 616; these read SIQN…SSPH, PSGQ…TALQ, and VSTQ…SSLL. The segment at 604 to 732 is sufficient for interaction with GRB2; sequence VSTQPPSMHS…SLPVTKSTDN (129 aa). Residues 619–627 form a required for interaction with CSK region; the sequence is PPQPPPRAG. Residues 649–770 form a required for interaction with MYO6 region; it reads KDVKEMFKDF…YRDPFGNPFA (122 aa). The required for interaction with GRB2 and CSK stretch occupies residues 663 to 671; that stretch reads PPAVPARKG. Ser-675, Ser-723, and Ser-729 each carry phosphoserine. The tract at residues 709–725 is sufficient for interaction with SH3KBP1 SH3 domain; that stretch reads NKINEPPKPAPRQVSLP. The interval 742–770 is disordered; sequence SFGSSQASVASSQPVSSEMYRDPFGNPFA. A compositionally biased stretch (low complexity) spans 745 to 758; sequence SSQASVASSQPVSS.

In terms of assembly, interacts (via NPXY motif) with DAB2 (via PID domain). Can interact (via PID domain) with LDLR, APP, APLP1 and APLP2, and weakly with INPP5D (via NPXY motifs); the interaction is impaired by tyrosine phosphorylation of the respective NPXY motifs. Can weakly interact (via PID domain) with LRP1 (via NPXY motif); the interaction is enhanced by tyrosine phosphorylation of the NPXY motif. Interacts with LRP2 (via NPXY motif); the interaction is not affected by tyrosine phosphorylation of the NPXY motif. Interacts with clathrin; in vitro can assemble clathrin triskelia into polyhedral coats. Interacts with AP2A2, ITGB1, ITGB3, ITGB5, PIAS2, DAB2IP, NOSTRIN, FCHO1, DVL3, EPS15, ITSN1 and EPS15L1. Interacts with SH3KBP1 (via SH3 domains). Interacts with GRB2; competes with SOS1 for binding to GRB2 and the interaction is enhanced by EGF and NT-3 stimulation. Interacts with MAP3K7; the interaction is induced by TGF-beta stimulation and may mediate TGF-beta stimulated JNK activation. Interacts with AXIN1 and PPP1CA; the interactions are mutually exclusive. Interacts with the globular tail of MYO6. Interacts (via DPF motifs) with FCHO2; the interaction is direct and required for DAB2-mediated LDLR endocytosis. Interacts with LRP6; the interaction involves LRP6 phosphorylation by CK2 and sequesters LRP6 towards clathrin-mediated endocytosis. Associates with the TGF-beta receptor complex. Interacts with SMAD2 and SMAD3; the interactions are enhanced upon TGF-beta stimulation. Interacts with GRB2; the interaction is enhanced by EGF and NT-3 stimulation. Interacts with SRC; the interaction is enhanced by EGF stimulation. Phosphorylated. Phosphorylation during mitosis is leading to membrane displacement. In terms of tissue distribution, expressed in deep invaginations, inclusion cysts and the surface epithelial cells of the ovary. Also expressed in breast epithelial cells, spleen, thymus, prostate, testis, macrophages, fibroblasts, lung epithelial cells, placenta, brain stem, heart and small intestine. Expressed in kidney proximal tubular epithelial cells (at protein level).

The protein localises to the cytoplasm. The protein resides in the cytoplasmic vesicle. It localises to the clathrin-coated vesicle membrane. It is found in the membrane. Its subcellular location is the clathrin-coated pit. Functionally, adapter protein that functions as a clathrin-associated sorting protein (CLASP) required for clathrin-mediated endocytosis of selected cargo proteins. Can bind and assemble clathrin, and binds simultaneously to phosphatidylinositol 4,5-bisphosphate (PtdIns(4,5)P2) and cargos containing non-phosphorylated NPXY internalization motifs, such as the LDL receptor, to recruit them to clathrin-coated pits. Can function in clathrin-mediated endocytosis independently of the AP-2 complex. Involved in endocytosis of integrin beta-1; this function seems to redundant with the AP-2 complex and seems to require DAB2 binding to endocytosis accessory EH domain-containing proteins such as EPS15, EPS15L1 and ITSN1. Involved in endocytosis of cystic fibrosis transmembrane conductance regulator/CFTR. Involved in endocytosis of megalin/LRP2 lipoprotein receptor during embryonal development. Required for recycling of the TGF-beta receptor. Involved in CFTR trafficking to the late endosome. Involved in several receptor-mediated signaling pathways. Involved in TGF-beta receptor signaling and facilitates phosphorylation of the signal transducer SMAD2. Mediates TFG-beta-stimulated JNK activation. May inhibit the canoniocal Wnt/beta-catenin signaling pathway by stabilizing the beta-catenin destruction complex through a competing association with axin preventing its dephosphorylation through protein phosphatase 1 (PP1). Sequesters LRP6 towards clathrin-mediated endocytosis, leading to inhibition of Wnt/beta-catenin signaling. May activate non-canonical Wnt signaling. In cell surface growth factor/Ras signaling pathways proposed to inhibit ERK activation by interrupting the binding of GRB2 to SOS1 and to inhibit SRC by preventing its activating phosphorylation at 'Tyr-419'. Proposed to be involved in modulation of androgen receptor (AR) signaling mediated by SRC activation; seems to compete with AR for interaction with SRC. Plays a role in the CSF-1 signal transduction pathway. Plays a role in cellular differentiation. Involved in cell positioning and formation of visceral endoderm (VE) during embryogenesis and proposed to be required in the VE to respond to Nodal signaling coming from the epiblast. Required for the epithelial to mesenchymal transition, a process necessary for proper embryonic development. May be involved in myeloid cell differentiation and can induce macrophage adhesion and spreading. May act as a tumor suppressor. The polypeptide is Disabled homolog 2 (DAB2) (Homo sapiens (Human)).